The chain runs to 322 residues: NADH-quinone oxidoreductase subunit H (322 aa).

Transmembrane regions (helical) follow at residues 12 to 32 (VGKALIVLVGIVGAGAFMSFI), 79 to 99 (IFILAPIIAFTAFILAFAVVP), 111 to 131 (VGLLYILAIAGLAVYAVLFAG), 151 to 171 (LSYEVFLGLSLMGIVIQTGSF), 183 to 203 (LWNVVPQILGFITFLFAGVAV), 234 to 254 (FFVGEYIGIVLISSLIVTLFF), 262 to 282 (LPPFIWFALKTACFMVFFILL), and 301 to 321 (VCLPLTLVNMLITGAVVLINV).

It belongs to the complex I subunit 1 family. In terms of assembly, NDH-1 is composed of 14 different subunits. Subunits NuoA, H, J, K, L, M, N constitute the membrane sector of the complex.

It is found in the cell inner membrane. It catalyses the reaction a quinone + NADH + 5 H(+)(in) = a quinol + NAD(+) + 4 H(+)(out). In terms of biological role, NDH-1 shuttles electrons from NADH, via FMN and iron-sulfur (Fe-S) centers, to quinones in the respiratory chain. The immediate electron acceptor for the enzyme in this species is believed to be ubiquinone. Couples the redox reaction to proton translocation (for every two electrons transferred, four hydrogen ions are translocated across the cytoplasmic membrane), and thus conserves the redox energy in a proton gradient. This subunit may bind ubiquinone. This is NADH-quinone oxidoreductase subunit H from Aeromonas salmonicida (strain A449).